Reading from the N-terminus, the 148-residue chain is Deoxyuridine 5'-triphosphate nucleotidohydrolase (148 aa).

Substrate contacts are provided by residues 67-69 (RSG), N80, 84-86 (LID), and M94.

Belongs to the dUTPase family. The cofactor is Mg(2+).

It catalyses the reaction dUTP + H2O = dUMP + diphosphate + H(+). Its pathway is pyrimidine metabolism; dUMP biosynthesis; dUMP from dCTP (dUTP route): step 2/2. Functionally, this enzyme is involved in nucleotide metabolism: it produces dUMP, the immediate precursor of thymidine nucleotides and it decreases the intracellular concentration of dUTP so that uracil cannot be incorporated into DNA. The chain is Deoxyuridine 5'-triphosphate nucleotidohydrolase from Burkholderia mallei (strain NCTC 10247).